A 745-amino-acid polypeptide reads, in one-letter code: Cellulose synthase 1 catalytic subunit [UDP-forming] (745 aa).

Transmembrane regions (helical) follow at residues 29–49 (YVVGALGLCALLAATMVTLSL), 106–126 (GILGVTLLLAELYALYMLFLS), and 153–173 (IFIPTYDEALSIVRLTVLGAL). A catalytic subdomain A region spans residues 147 to 240 (EWPTVDIFIP…HILILDCDHI (94 aa)). Asp189 is an active-site residue. The substrate site is built by Asp236 and Asp238. Residues 317–377 (KAIEEIGGFA…GQRMRWARGM (61 aa)) are catalytic subdomain B. Residue Asp333 is part of the active site. A run of 6 helical transmembrane segments spans residues 407–427 (FFFAIPRVIFLASPLAFLFFS), 430–450 (IIAASPLAVGVYAIPHMFHSI), 468–488 (VYETVMALFLVRVTIVTMLFP), 515–535 (NIIFAIIMALGLLRGLYALIF), 547–567 (ALNCIWSVISLIILMAVISVG), and 649–669 (AVFTWSISNIQVEAAVVRFVF). One can recognise a PilZ domain in the interval 572 to 670 (QLRQSHRIEA…EAAVVRFVFG (99 aa)). Residues 708-717 (IAHSRPKKKP) are compositionally biased toward basic residues. Residues 708 to 745 (IAHSRPKKKPIALPVERREPTTSQGGQKQEGKISRAAS) are disordered. The span at 736–745 (QEGKISRAAS) shows a compositional bias: basic and acidic residues.

This sequence belongs to the glycosyltransferase 2 family. Mg(2+) is required as a cofactor.

The protein localises to the cell inner membrane. The catalysed reaction is [(1-&gt;4)-beta-D-glucosyl](n) + UDP-alpha-D-glucose = [(1-&gt;4)-beta-D-glucosyl](n+1) + UDP + H(+). The protein operates within glycan metabolism; bacterial cellulose biosynthesis. Activated by bis-(3'-5') cyclic diguanylic acid (c-di-GMP). Its function is as follows. Catalytic subunit of cellulose synthase. It polymerizes uridine 5'-diphosphate glucose to cellulose. The thick cellulosic mats generated by this enzyme probably provide a specialized protective environment to the bacterium. The sequence is that of Cellulose synthase 1 catalytic subunit [UDP-forming] (bcsAI) from Komagataeibacter xylinus (Gluconacetobacter xylinus).